The chain runs to 261 residues: Triosephosphate isomerase (261 aa).

10–12 (NWK) contributes to the substrate binding site. The active-site Electrophile is His100. Glu172 (proton acceptor) is an active-site residue. Substrate contacts are provided by residues Gly178, Ser218, and 239-240 (GG).

This sequence belongs to the triosephosphate isomerase family. Homodimer.

The protein resides in the cytoplasm. It catalyses the reaction D-glyceraldehyde 3-phosphate = dihydroxyacetone phosphate. Its pathway is carbohydrate biosynthesis; gluconeogenesis. It participates in carbohydrate degradation; glycolysis; D-glyceraldehyde 3-phosphate from glycerone phosphate: step 1/1. Functionally, involved in the gluconeogenesis. Catalyzes stereospecifically the conversion of dihydroxyacetone phosphate (DHAP) to D-glyceraldehyde-3-phosphate (G3P). The protein is Triosephosphate isomerase of Nocardia farcinica (strain IFM 10152).